The sequence spans 541 residues: Synaptotagmin-1 (541 aa).

The Extracellular portion of the chain corresponds to 1 to 11 (MGFFSTILGFC). Residues 12–32 (GFGVGISLGLVIGYVLFVYLL) traverse the membrane as a helical segment. At 33-541 (PNDVKDPEIR…QIELEWRTAS (509 aa)) the chain is on the cytoplasmic side. The 183-residue stretch at 67–249 (DFDRVDWINR…WPKTLVVPIL (183 aa)) folds into the SMP-LTD domain. Positions 227–509 (QEQIKDQVAN…TLGYVDIPVV (283 aa)) are phospholipid binding. C2 domains are found at residues 240–362 (WPKT…AFTL) and 401–521 (GFEE…NQKF). Positions 276, 282, 332, and 334 each coordinate Ca(2+).

It belongs to the synaptotagmin family. Interacts with cabbage leaf curl virus (CaLCuV) BC1 protein and tobacco mosaic virus (TMV) MP protein. Interacts with ROSY1. Ca(2+) is required as a cofactor. In terms of tissue distribution, expressed in roots, shoots, rosette and cauline leaves, inflorescences, and siliques. In roots, expressed in vascular bundle, epidermis, the differential zone of the tips of root hairs, and the quiescent center and columella of root tips.

It is found in the cell membrane. It localises to the endosome membrane. Its function is as follows. Plays an important role in maintaining plasma membrane integrity during freezing and osmotic stresses. May function in membrane resealing during calcium-dependent freezing tolerance. May regulate endocytosis and endosome recycling at the plasma membrane and cell-to-cell trafficking of cabbage leaf curl virus (CaLCuV) and tobacco mosaic virus (TMV) movement proteins via plasmodesmata. The polypeptide is Synaptotagmin-1 (SYT1) (Arabidopsis thaliana (Mouse-ear cress)).